The chain runs to 349 residues: S-adenosylmethionine:tRNA ribosyltransferase-isomerase (349 aa).

This sequence belongs to the QueA family. In terms of assembly, monomer.

The protein resides in the cytoplasm. It catalyses the reaction 7-aminomethyl-7-carbaguanosine(34) in tRNA + S-adenosyl-L-methionine = epoxyqueuosine(34) in tRNA + adenine + L-methionine + 2 H(+). Its pathway is tRNA modification; tRNA-queuosine biosynthesis. Its function is as follows. Transfers and isomerizes the ribose moiety from AdoMet to the 7-aminomethyl group of 7-deazaguanine (preQ1-tRNA) to give epoxyqueuosine (oQ-tRNA). The polypeptide is S-adenosylmethionine:tRNA ribosyltransferase-isomerase (Pseudomonas putida (strain GB-1)).